We begin with the raw amino-acid sequence, 177 residues long: ATP-dependent protease subunit HslV (177 aa).

Residue threonine 6 is part of the active site. Na(+) is bound by residues serine 162, cysteine 165, and threonine 168.

This sequence belongs to the peptidase T1B family. HslV subfamily. As to quaternary structure, a double ring-shaped homohexamer of HslV is capped on each side by a ring-shaped HslU homohexamer. The assembly of the HslU/HslV complex is dependent on binding of ATP.

The protein resides in the cytoplasm. It carries out the reaction ATP-dependent cleavage of peptide bonds with broad specificity.. Allosterically activated by HslU binding. Its function is as follows. Protease subunit of a proteasome-like degradation complex believed to be a general protein degrading machinery. In Desulforudis audaxviator (strain MP104C), this protein is ATP-dependent protease subunit HslV.